A 170-amino-acid polypeptide reads, in one-letter code: M-agglutinin (170 aa).

The signal sequence occupies residues 1-24; it reads MNLKKIAIASSVFAGITMALTCHA.

Functionally, this protein is a non-fimbrial hemagglutinin that is specific for blood group M. In Escherichia coli, this protein is M-agglutinin (bmaE).